A 256-amino-acid polypeptide reads, in one-letter code: Trans-aconitate 2-methyltransferase (256 aa).

It belongs to the methyltransferase superfamily. Tam family.

The protein localises to the cytoplasm. The catalysed reaction is trans-aconitate + S-adenosyl-L-methionine = (E)-3-(methoxycarbonyl)pent-2-enedioate + S-adenosyl-L-homocysteine. Catalyzes the S-adenosylmethionine monomethyl esterification of trans-aconitate. The polypeptide is Trans-aconitate 2-methyltransferase (Afipia carboxidovorans (strain ATCC 49405 / DSM 1227 / KCTC 32145 / OM5) (Oligotropha carboxidovorans)).